Consider the following 1273-residue polypeptide: Homeobox protein cut-like ceh-44 (1273 aa).

2 coiled-coil regions span residues 101–407 (LLKG…DGFK) and 440–468 (RQKNTDSELIEKIQEAKRNKAVCELKFED). 3 consecutive DNA-binding regions (CUT) follow at residues 591-681 (NVQA…LSPR), 832-919 (QAQY…KQPK), and 978-1065 (IDES…KEES). The segment at 1069 to 1100 (VKAKIESVPAPREAPRPVKRKHSSDTDDYDLN) is disordered. A DNA-binding region (homeobox) is located at residues 1103 to 1162 (KPIQRTVITDYQKDTLRFVFVNEQHPSNELCEQISLKLDMSLRTVQNWFHNHRTRSKARE).

Belongs to the CUT homeobox family.

Its subcellular location is the nucleus. Its function is as follows. Probable DNA-binding regulatory protein involved in cell-fate specification. This chain is Homeobox protein cut-like ceh-44, found in Caenorhabditis elegans.